Consider the following 452-residue polypeptide: Bifunctional protein GlmU (452 aa).

The segment at 1 to 226 (MKNIHAIILA…KFEIAGVNDK (226 aa)) is pyrophosphorylase. Residues 9 to 12 (LAAG), K23, Q73, 78 to 79 (GT), 100 to 102 (YGD), G137, E151, N166, and N224 contribute to the UDP-N-acetyl-alpha-D-glucosamine site. D102 serves as a coordination point for Mg(2+). A Mg(2+)-binding site is contributed by N224. The tract at residues 227–247 (VQLAELERIFQINQATQFMQQ) is linker. The segment at 248–452 (GLSLKDPNRF…LKNWQRPTKK (205 aa)) is N-acetyltransferase. UDP-N-acetyl-alpha-D-glucosamine-binding residues include R330 and K348. H360 functions as the Proton acceptor in the catalytic mechanism. 2 residues coordinate UDP-N-acetyl-alpha-D-glucosamine: Y363 and N374. Residues A377, 383–384 (NY), S402, A420, and R437 contribute to the acetyl-CoA site.

In the N-terminal section; belongs to the N-acetylglucosamine-1-phosphate uridyltransferase family. The protein in the C-terminal section; belongs to the transferase hexapeptide repeat family. Homotrimer. Requires Mg(2+) as cofactor.

It localises to the cytoplasm. The catalysed reaction is alpha-D-glucosamine 1-phosphate + acetyl-CoA = N-acetyl-alpha-D-glucosamine 1-phosphate + CoA + H(+). It carries out the reaction N-acetyl-alpha-D-glucosamine 1-phosphate + UTP + H(+) = UDP-N-acetyl-alpha-D-glucosamine + diphosphate. The protein operates within nucleotide-sugar biosynthesis; UDP-N-acetyl-alpha-D-glucosamine biosynthesis; N-acetyl-alpha-D-glucosamine 1-phosphate from alpha-D-glucosamine 6-phosphate (route II): step 2/2. Its pathway is nucleotide-sugar biosynthesis; UDP-N-acetyl-alpha-D-glucosamine biosynthesis; UDP-N-acetyl-alpha-D-glucosamine from N-acetyl-alpha-D-glucosamine 1-phosphate: step 1/1. It participates in bacterial outer membrane biogenesis; LPS lipid A biosynthesis. Functionally, catalyzes the last two sequential reactions in the de novo biosynthetic pathway for UDP-N-acetylglucosamine (UDP-GlcNAc). The C-terminal domain catalyzes the transfer of acetyl group from acetyl coenzyme A to glucosamine-1-phosphate (GlcN-1-P) to produce N-acetylglucosamine-1-phosphate (GlcNAc-1-P), which is converted into UDP-GlcNAc by the transfer of uridine 5-monophosphate (from uridine 5-triphosphate), a reaction catalyzed by the N-terminal domain. In Ruthia magnifica subsp. Calyptogena magnifica, this protein is Bifunctional protein GlmU.